A 239-amino-acid polypeptide reads, in one-letter code: IkB-like protein (239 aa).

ANK repeat units follow at residues 48–77, 87–116, 124–153, and 158–187; these read NKIT…YPGE, DGNS…KNGI, NGVT…NPNR, and KGFT…KPLF. Residues 81–87 carry the Nuclear localization signal motif; that stretch reads HYRRDKD. A Nuclear localization signal motif is present at residues 203–214; it reads KKKPKIIITGCE. Residues 206–213 carry the PxIxITxC motif; Interaction with host PPP3CA motif; it reads PKIIITGC. Residues 228–231 carry the FLCV motif motif; the sequence is FLCV.

It belongs to the asfivirus A238L family. Interacts with host PPIA. Interacts with host PPP3CA/Calcineurin. Interacts with host RELA/p65; interaction of the 32 kDa form with host RELA results in the formation of a stable complex with NF-kappa-B. Interacts with host PPP3R1. Interacts with host EP300; this interaction inhibits the association of host EP300 with host RELA, JUN and NFATC2. Post-translationally, the protein exists in a 28 kDa and a 32 kDa form, probably due to post-translational modifications which are neither phosphorylation, nor sumoylation.

The protein resides in the host nucleus. Its subcellular location is the host cytoplasm. Its function is as follows. IkB-like protein that inhibits the binding of NF-kappa-B to DNA, thereby downregulating pro-inflammatory cytokine production. Forms a heterodimer with the NF-kappa-B subunit RELA/p65 and prevents the activation of the NF-kappa-B transcription factor. Inhibits calcineurin function, which is required for the induction of nuclear factor of activated T cells (NFAT)-dependent immune response genes. Prevents the binding of substrates to calcineurin without affecting the phosphatase activity. Does not contain the serine residues that are phosphorylated by host IkB kinase and thus is not degraded following stimulation of the NFkB pathway. This Ornithodoros (relapsing fever ticks) protein is IkB-like protein (A238L).